The sequence spans 273 residues: MDIILWLQAVILGLVQGMTEFLPISSTAHLILFSDLLGWKSIWHKTALDAMQFGSVIAVLGYFWQDIHQIVQGSWQAWQRRDWQREEWKLLLGITVGTIPALAAGLLLKLAKVELDRPQIIATMAIAMAILLGLAEQWGSRKRTYQDIGILDGFLVGCGQMIALLPGASRSGSTLAAALALGLERPTAARFSFLLGIPTLTIATLVQAKDVFDEGTLLIPLVIATLSSMVFSYLAIAWLLQFLQRHSTWVFIWYRIGLGSALWGAIALGSLQS.

Helical transmembrane passes span 3–23 (IILWLQAVILGLVQGMTEFLP), 47–67 (ALDAMQFGSVIAVLGYFWQDI), 90–110 (LLLGITVGTIPALAAGLLLKL), 120–140 (IIATMAIAMAILLGLAEQWGS), 148–168 (IGILDGFLVGCGQMIALLPGA), 186–206 (PTAARFSFLLGIPTLTIATLV), 217–237 (LLIPLVIATLSSMVFSYLAIA), and 249–269 (WVFIWYRIGLGSALWGAIALG).

Belongs to the UppP family.

Its subcellular location is the cell inner membrane. It catalyses the reaction di-trans,octa-cis-undecaprenyl diphosphate + H2O = di-trans,octa-cis-undecaprenyl phosphate + phosphate + H(+). Its function is as follows. Catalyzes the dephosphorylation of undecaprenyl diphosphate (UPP). Confers resistance to bacitracin. The sequence is that of Undecaprenyl-diphosphatase from Thermosynechococcus vestitus (strain NIES-2133 / IAM M-273 / BP-1).